A 586-amino-acid polypeptide reads, in one-letter code: uncharacterized protein (586 aa).

This is an uncharacterized protein from Saccharomyces cerevisiae (strain ATCC 204508 / S288c) (Baker's yeast).